The following is a 231-amino-acid chain: Large ribosomal subunit protein uL1 (231 aa).

It belongs to the universal ribosomal protein uL1 family. In terms of assembly, part of the 50S ribosomal subunit.

Functionally, binds directly to 23S rRNA. The L1 stalk is quite mobile in the ribosome, and is involved in E site tRNA release. Protein L1 is also a translational repressor protein, it controls the translation of the L11 operon by binding to its mRNA. This Acinetobacter baylyi (strain ATCC 33305 / BD413 / ADP1) protein is Large ribosomal subunit protein uL1.